The chain runs to 542 residues: Chaperonin GroEL 2 (542 aa).

Residues 30–33, K51, 87–91, G415, and D496 contribute to the ATP site; these read TLGP and DGTTT. Positions 523-542 are disordered; the sequence is AEKPKKDGQPQMPPAPGMDF. Residues 533 to 542 are compositionally biased toward pro residues; the sequence is QMPPAPGMDF.

This sequence belongs to the chaperonin (HSP60) family. Forms a cylinder of 14 subunits composed of two heptameric rings stacked back-to-back. Interacts with the co-chaperonin GroES.

It is found in the cytoplasm. The enzyme catalyses ATP + H2O + a folded polypeptide = ADP + phosphate + an unfolded polypeptide.. Together with its co-chaperonin GroES, plays an essential role in assisting protein folding. The GroEL-GroES system forms a nano-cage that allows encapsulation of the non-native substrate proteins and provides a physical environment optimized to promote and accelerate protein folding. The protein is Chaperonin GroEL 2 of Sinorhizobium medicae (strain WSM419) (Ensifer medicae).